A 291-amino-acid polypeptide reads, in one-letter code: Putative transport permease ycf38 (291 aa).

6 helical membrane-spanning segments follow: residues 47-67 (ATLM…GGLF), 87-107 (SGII…PLMF), 135-155 (FMTC…LFMG), 165-185 (LIFA…SLAL), 195-215 (LLAL…ALAP), and 262-282 (ISLG…AYIV). Residues 47–289 (ATLMAGIIQP…YIVSNILKAR (243 aa)) form the ABC transmembrane type-2 domain.

This sequence belongs to the ABC-2 integral membrane protein family.

Its subcellular location is the plastid. It localises to the chloroplast membrane. In Porphyra purpurea (Red seaweed), this protein is Putative transport permease ycf38 (ycf38).